A 249-amino-acid polypeptide reads, in one-letter code: 5'-nucleotidase SurE (249 aa).

Positions 9, 10, 40, and 92 each coordinate a divalent metal cation.

Belongs to the SurE nucleotidase family. A divalent metal cation is required as a cofactor.

It is found in the cytoplasm. It carries out the reaction a ribonucleoside 5'-phosphate + H2O = a ribonucleoside + phosphate. In terms of biological role, nucleotidase that shows phosphatase activity on nucleoside 5'-monophosphates. The protein is 5'-nucleotidase SurE of Shewanella sp. (strain MR-4).